The primary structure comprises 702 residues: Ribosomal RNA large subunit methyltransferase K/L (702 aa).

A THUMP domain is found at 43–154 (LVYQSLMWSR…KETASIALDL (112 aa)).

Belongs to the methyltransferase superfamily. RlmKL family.

The protein resides in the cytoplasm. The enzyme catalyses guanosine(2445) in 23S rRNA + S-adenosyl-L-methionine = N(2)-methylguanosine(2445) in 23S rRNA + S-adenosyl-L-homocysteine + H(+). The catalysed reaction is guanosine(2069) in 23S rRNA + S-adenosyl-L-methionine = N(2)-methylguanosine(2069) in 23S rRNA + S-adenosyl-L-homocysteine + H(+). Functionally, specifically methylates the guanine in position 2445 (m2G2445) and the guanine in position 2069 (m7G2069) of 23S rRNA. The protein is Ribosomal RNA large subunit methyltransferase K/L of Escherichia coli O6:H1 (strain CFT073 / ATCC 700928 / UPEC).